The sequence spans 73 residues: Translation initiation factor IF-1 (73 aa).

The region spanning 1 to 72 (MAKEDVIEVE…TKGRITYRFI (72 aa)) is the S1-like domain.

Belongs to the IF-1 family. As to quaternary structure, component of the 30S ribosomal translation pre-initiation complex which assembles on the 30S ribosome in the order IF-2 and IF-3, IF-1 and N-formylmethionyl-tRNA(fMet); mRNA recruitment can occur at any time during PIC assembly.

It is found in the cytoplasm. Its function is as follows. One of the essential components for the initiation of protein synthesis. Stabilizes the binding of IF-2 and IF-3 on the 30S subunit to which N-formylmethionyl-tRNA(fMet) subsequently binds. Helps modulate mRNA selection, yielding the 30S pre-initiation complex (PIC). Upon addition of the 50S ribosomal subunit IF-1, IF-2 and IF-3 are released leaving the mature 70S translation initiation complex. The sequence is that of Translation initiation factor IF-1 from Lactobacillus johnsonii (strain CNCM I-12250 / La1 / NCC 533).